The chain runs to 391 residues: Stearoyl-[acyl-carrier-protein] 9-desaturase 6, chloroplastic (391 aa).

Residues 1–38 (MLAHKSLLSFTTQWATLMPSPSTFLASRPRGPAKISAV) constitute a chloroplast transit peptide. Fe cation contacts are provided by Glu130, Glu168, His171, Glu221, Glu254, and His257.

The protein belongs to the fatty acid desaturase type 2 family. Homodimer. The cofactor is Fe(2+).

The protein resides in the plastid. The protein localises to the chloroplast. The catalysed reaction is octadecanoyl-[ACP] + 2 reduced [2Fe-2S]-[ferredoxin] + O2 + 2 H(+) = (9Z)-octadecenoyl-[ACP] + 2 oxidized [2Fe-2S]-[ferredoxin] + 2 H2O. The protein operates within lipid metabolism; fatty acid metabolism. In terms of biological role, converts stearoyl-ACP to oleoyl-ACP by introduction of a cis double bond between carbons 9 and 10 of the acyl chain. The sequence is that of Stearoyl-[acyl-carrier-protein] 9-desaturase 6, chloroplastic (S-ACP-DES6) from Arabidopsis thaliana (Mouse-ear cress).